We begin with the raw amino-acid sequence, 786 residues long: MNEKILKTLEYDKIQQALLGQVVTANGRQLVQAMQPLTDPVAVQQALDETADGASALRLKGGIPVPQLENIDPALKRVDIGAVLNGQELASISRVLQTVSAIDKFLTDLQDQIDFRQLYTLQESLTVLPQLSRRLKTAVDPDGTLTDEASPQLHGVREQIKSIEGEIRGKMTNYTRGAQSKYLSDPIVTIRDDRYVIPVKAEYRAKFGGVVHDQSATGQTLFIEPQAIVALNNRLREAQLAEVAEINRILAELSNELAPYTGQIKANAAVLGHFDFINAKARLAKAEKATEPLVSADNDVLLRDARHPLIDPHKVVGNDIPLGDKYQAMVITGPNTGGKTITLKTLGLLQLMGQSGLFIPADDESRIGIFDEVFADIGDEQSIEQNLSTFSAHMDNIVHILKQLSQNSLVLFDELGAGTDPQEGAALAIAILDAVGEVGAYVVATTHYPELKLYGYNTAKTINASMEFDSKTLQPTYRLLVGVPGRSNAFDISARLGLPGVIVERAKSMISSDSHELNNMISDLEKQRKAAETAYEAARRQLADAQSVHDELAAAYKKFTTERDAQLQQAKDKANTLVDKAQTKADKIIKQLRQMQLTNPGTVKENQLIAAKTALKQLHQDEPLQKNRILRREREKQALHVGDEVKVASYDQTGTLLEQFDKKHWQVQLGILKMKVPTDELKKIKSSKQSAAQRPVVKVSGGGMSGPSTTLDLRGERYDQAMADLDQYIDAALLAGYPSVTIIHGLGTGAIRNGVTQYLKRNRQVKTYGFAPQNAGGSGATIVNFK.

333-340 (GPNTGGKT) contacts ATP. Residues 711-786 (LDLRGERYDQ…GSGATIVNFK (76 aa)) form the Smr domain.

The protein belongs to the DNA mismatch repair MutS family. MutS2 subfamily. In terms of assembly, homodimer. Binds to stalled ribosomes, contacting rRNA.

In terms of biological role, endonuclease that is involved in the suppression of homologous recombination and thus may have a key role in the control of bacterial genetic diversity. Functionally, acts as a ribosome collision sensor, splitting the ribosome into its 2 subunits. Detects stalled/collided 70S ribosomes which it binds and splits by an ATP-hydrolysis driven conformational change. Acts upstream of the ribosome quality control system (RQC), a ribosome-associated complex that mediates the extraction of incompletely synthesized nascent chains from stalled ribosomes and their subsequent degradation. Probably generates substrates for RQC. This Lacticaseibacillus paracasei (strain ATCC 334 / BCRC 17002 / CCUG 31169 / CIP 107868 / KCTC 3260 / NRRL B-441) (Lactobacillus paracasei) protein is Endonuclease MutS2.